Consider the following 929-residue polypeptide: Bifunctional glutamine synthetase adenylyltransferase/adenylyl-removing enzyme (929 aa).

The tract at residues 1 to 423 (MSTPIDSSRA…RHFEQIFAAR (423 aa)) is adenylyl removase. Positions 433–929 (ARIRPEQSGD…FQLWEDIFGT (497 aa)) are adenylyl transferase.

The protein belongs to the GlnE family. Mg(2+) is required as a cofactor.

The catalysed reaction is [glutamine synthetase]-O(4)-(5'-adenylyl)-L-tyrosine + phosphate = [glutamine synthetase]-L-tyrosine + ADP. The enzyme catalyses [glutamine synthetase]-L-tyrosine + ATP = [glutamine synthetase]-O(4)-(5'-adenylyl)-L-tyrosine + diphosphate. Functionally, involved in the regulation of glutamine synthetase GlnA, a key enzyme in the process to assimilate ammonia. When cellular nitrogen levels are high, the C-terminal adenylyl transferase (AT) inactivates GlnA by covalent transfer of an adenylyl group from ATP to specific tyrosine residue of GlnA, thus reducing its activity. Conversely, when nitrogen levels are low, the N-terminal adenylyl removase (AR) activates GlnA by removing the adenylyl group by phosphorolysis, increasing its activity. The regulatory region of GlnE binds the signal transduction protein PII (GlnB) which indicates the nitrogen status of the cell. This chain is Bifunctional glutamine synthetase adenylyltransferase/adenylyl-removing enzyme, found in Nitrosomonas europaea (strain ATCC 19718 / CIP 103999 / KCTC 2705 / NBRC 14298).